The primary structure comprises 192 residues: Iodate reductase subunit IdrB (192 aa).

The segment at residues 1–52 (MSENIIPVRAVPAHDHEHDGERACMSRRRFLLFGGTSVALLSIASLPGVAQV) is a signal peptide (tat-type signal). Positions 102 to 173 (GADKDIVAFN…LEVQGDDIYA (72 aa)) constitute a Rieske domain. Residues Cys114, His116, Cys135, and His138 each contribute to the [2Fe-2S] cluster site.

This sequence belongs to the AOX family. The iodate reductase (Idr) complex is composed of a molybdopterin-dependent iodate reductase (IdrA and IdrB subunits) and two associated peroxidases (IdrP1 and IdrP2). It depends on [2Fe-2S] cluster as a cofactor. Predicted to be exported by the Tat system. The position of the signal peptide cleavage has not been experimentally proven.

The protein localises to the periplasm. Its function is as follows. Involved in iodate respiration. Probably catalyzes the reduction of iodate (IO(3)(-)) to hypoiodous acid (HIO) and H(2)O(2), using a reduced cytochrome c as the electron donor. The protein is Iodate reductase subunit IdrB of Pseudomonas sp. (strain SCT).